The following is a 795-amino-acid chain: Phenylalanine--tRNA ligase beta subunit (795 aa).

One can recognise a tRNA-binding domain in the interval 39–148 (AGSFHGVVVG…ADAPIGTDIR (110 aa)). Positions 401-476 (PKRATITLRR…RVYGYNNIPD (76 aa)) constitute a B5 domain. The Mg(2+) site is built by aspartate 454, aspartate 460, glutamate 463, and glutamate 464. In terms of domain architecture, FDX-ACB spans 701-794 (SRFPANRRDI…LKERFQASLR (94 aa)).

This sequence belongs to the phenylalanyl-tRNA synthetase beta subunit family. Type 1 subfamily. As to quaternary structure, tetramer of two alpha and two beta subunits. It depends on Mg(2+) as a cofactor.

It localises to the cytoplasm. It carries out the reaction tRNA(Phe) + L-phenylalanine + ATP = L-phenylalanyl-tRNA(Phe) + AMP + diphosphate + H(+). The chain is Phenylalanine--tRNA ligase beta subunit from Escherichia coli O157:H7.